The chain runs to 152 residues: Xanthine-guanine phosphoribosyltransferase (152 aa).

Residues 37-38 (RG), arginine 69, and 88-96 (DDLVDTGGT) contribute to the 5-phospho-alpha-D-ribose 1-diphosphate site. GMP is bound at residue arginine 69. Aspartate 89 is a Mg(2+) binding site. Aspartate 92 and isoleucine 135 together coordinate guanine. Residues aspartate 92 and isoleucine 135 each contribute to the xanthine site. GMP-binding positions include 92-96 (DTGGT) and 134-135 (WI).

The protein belongs to the purine/pyrimidine phosphoribosyltransferase family. XGPT subfamily. As to quaternary structure, homotetramer. Mg(2+) serves as cofactor.

It localises to the cell inner membrane. The catalysed reaction is GMP + diphosphate = guanine + 5-phospho-alpha-D-ribose 1-diphosphate. It catalyses the reaction XMP + diphosphate = xanthine + 5-phospho-alpha-D-ribose 1-diphosphate. It carries out the reaction IMP + diphosphate = hypoxanthine + 5-phospho-alpha-D-ribose 1-diphosphate. It functions in the pathway purine metabolism; GMP biosynthesis via salvage pathway; GMP from guanine: step 1/1. The protein operates within purine metabolism; XMP biosynthesis via salvage pathway; XMP from xanthine: step 1/1. In terms of biological role, purine salvage pathway enzyme that catalyzes the transfer of the ribosyl-5-phosphate group from 5-phospho-alpha-D-ribose 1-diphosphate (PRPP) to the N9 position of the 6-oxopurines guanine and xanthine to form the corresponding ribonucleotides GMP (guanosine 5'-monophosphate) and XMP (xanthosine 5'-monophosphate), with the release of PPi. To a lesser extent, also acts on hypoxanthine. This Klebsiella pneumoniae (strain 342) protein is Xanthine-guanine phosphoribosyltransferase.